The following is a 1052-amino-acid chain: SE-cephalotoxin (1052 aa).

The signal sequence occupies residues 1 to 21 (MMGTSRCVILLFALLLWAANA). Positions 22-29 (APPEIHTT) are excised as a propeptide. The N-linked (GlcNAc...) asparagine glycan is linked to N41. Residues 130-194 (TGVNRKLDQI…DMNKRRLMAE (65 aa)) are a coiled coil. An N-linked (GlcNAc...) asparagine glycan is attached at N353. An EGF-like domain is found at 460–497 (PGNPCNHGCNGHGECKVVPYTDQFQCFCHGNYEGKMCQ). 3 disulfide bridges follow: C464–C474, C468–C485, and C487–C496. N576 and N715 each carry an N-linked (GlcNAc...) asparagine glycan. One can recognise a Sushi domain in the interval 709–769 (TSCPPLNVTH…QWSATPKCES (61 aa)). 7 disulfide bridges follow: C711–C752, C739–C767, C780–C814, C784–C820, C795–C804, C829–C847, and C841–C858. The 54-residue stretch at 768 to 821 (ESSWSRWSKWSACASTCGNATQSRRRRCLGQSESEKCIGPSKQVRKCFVEDCCQ) folds into the TSP type-1 domain. A glycan (N-linked (GlcNAc...) asparagine) is linked at N786. One can recognise an LDL-receptor class A domain in the interval 819-859 (CCQEKYGKFKCDNNKCISLSRVCDGNDDCRNAEDESKSRCK).

Monomer. Expressed by the salivary gland.

The protein resides in the secreted. The polypeptide is SE-cephalotoxin (Acanthosepion esculentum (Golden cuttlefish)).